The primary structure comprises 359 residues: MLGVIRNKTIRPSFSAFRFFSSAKQMTVRDALNSALDVEMSADSKVFLMGEEVGEYQGAYKVTKGLLEKYGPERVLDTPITEAGFTGIGVGAAYYGLKPVVEFMTFNFSMQAIDHIINSAAKSNYMSAGQISVPIVFRGLNGDAAGVGAQHSHCYASWYGSCPGLKVLVPHSAEDARGLLKAAIRDPDPVVFLENELLYGESFPVSAEVLDSSFWLPIGKAKIEREGKDVTITAFSKMVGFALKAAEILEKEGISAEVINLRSIRPLDRPTINASVRKTNRLVTVEEGFPQHGVGAEICTSVIEESFGYLDATVERIGGADVPMPYAGNLERLVVPHVEDIVRAAKRACHRSVPLAAAA.

A mitochondrion-targeting transit peptide spans 1 to 19 (MLGVIRNKTIRPSFSAFRF). Glutamate 82 serves as a coordination point for thiamine diphosphate. Residues isoleucine 135, alanine 183, isoleucine 184, and aspartate 186 each coordinate K(+).

Tetramer of 2 alpha and 2 beta subunits. The cofactor is thiamine diphosphate.

The protein localises to the mitochondrion matrix. The catalysed reaction is N(6)-[(R)-lipoyl]-L-lysyl-[protein] + pyruvate + H(+) = N(6)-[(R)-S(8)-acetyldihydrolipoyl]-L-lysyl-[protein] + CO2. Functionally, the pyruvate dehydrogenase complex catalyzes the overall conversion of pyruvate to acetyl-CoA and CO(2). It contains multiple copies of three enzymatic components: pyruvate dehydrogenase (E1), dihydrolipoamide acetyltransferase (E2) and lipoamide dehydrogenase (E3). The polypeptide is Pyruvate dehydrogenase E1 component subunit beta, mitochondrial (Pisum sativum (Garden pea)).